The following is a 133-amino-acid chain: Meiotically up-regulated gene 15 protein (133 aa).

Its subcellular location is the cytoplasm. The protein resides in the nucleus. In terms of biological role, has a role in meiosis. The sequence is that of Meiotically up-regulated gene 15 protein (mug15) from Schizosaccharomyces pombe (strain 972 / ATCC 24843) (Fission yeast).